The chain runs to 81 residues: UPF0298 protein SAK_1599 (81 aa).

It belongs to the UPF0298 family.

It localises to the cytoplasm. The sequence is that of UPF0298 protein SAK_1599 from Streptococcus agalactiae serotype Ia (strain ATCC 27591 / A909 / CDC SS700).